Here is a 343-residue protein sequence, read N- to C-terminus: Ubiquitin thioesterase OTU1 (343 aa).

The segment at 45-123 is UBX-like; sequence RCKAKGGTHL…IVEEDQTRPK (79 aa). Residues 144-269 enclose the OTU domain; the sequence is LTRTAVPADN…GIHYDPLQRN (126 aa). Residues 149 to 155 form a cys-loop region; it reads VPADNSC. Residue D152 is part of the active site. C155 serves as the catalytic Nucleophile. The segment at 208–218 is variable-loop; the sequence is IRRDDTWGGAI. A his-loop region spans residues 258 to 262; the sequence is YDGIH. Residue I261 coordinates substrate. Residue H262 is part of the active site. Residues 286 to 291 are S2 site; the sequence is DIVLVQ. The C2H2-type zinc finger occupies 313–337; sequence LRCMICQKGLTGQAEARDHARETGH. The active site involves H337.

Interacts with VCP; the interaction is direct. Interacts with FAF2/UBXD8. Interacts with DERL1; however interaction is dependent on the UBAX-like region, suggesting that it may be indirect. Interacts with PLAA, UBXN6 and VCP; may form a complex involved in macroautophagy.

Its subcellular location is the cytoplasm. It catalyses the reaction Thiol-dependent hydrolysis of ester, thioester, amide, peptide and isopeptide bonds formed by the C-terminal Gly of ubiquitin (a 76-residue protein attached to proteins as an intracellular targeting signal).. Functionally, hydrolase that can remove conjugated ubiquitin from proteins and participates in endoplasmic reticulum-associated degradation (ERAD) for misfolded lumenal proteins. May act by triming the ubiquitin chain on the associated substrate to facilitate their threading through the VCP/p97 pore. Ubiquitin moieties on substrates may present a steric impediment to the threading process when the substrate is transferred to the VCP pore and threaded through VCP's axial channel. Mediates deubiquitination of 'Lys-27'-, 'Lys-29'- and 'Lys-33'-linked polyubiquitin chains. Also able to hydrolyze 'Lys-11'-linked ubiquitin chains. Cleaves both polyubiquitin and di-ubiquitin. May play a role in macroautophagy, regulating for instance the clearance of damaged lysosomes. May recruit PLAA, UBXN6 and VCP to damaged lysosome membranes decorated with K48-linked ubiquitin chains and remove these chains allowing autophagosome formation. The sequence is that of Ubiquitin thioesterase OTU1 (Yod1) from Mus musculus (Mouse).